Reading from the N-terminus, the 172-residue chain is 3-hydroxydecanoyl-[acyl-carrier-protein] dehydratase (172 aa).

The active site involves His-71.

Belongs to the thioester dehydratase family. FabA subfamily. Homodimer.

The protein resides in the cytoplasm. The catalysed reaction is a (3R)-hydroxyacyl-[ACP] = a (2E)-enoyl-[ACP] + H2O. The enzyme catalyses (3R)-hydroxydecanoyl-[ACP] = (2E)-decenoyl-[ACP] + H2O. It carries out the reaction (2E)-decenoyl-[ACP] = (3Z)-decenoyl-[ACP]. It participates in lipid metabolism; fatty acid biosynthesis. Functionally, necessary for the introduction of cis unsaturation into fatty acids. Catalyzes the dehydration of (3R)-3-hydroxydecanoyl-ACP to E-(2)-decenoyl-ACP and then its isomerization to Z-(3)-decenoyl-ACP. Can catalyze the dehydratase reaction for beta-hydroxyacyl-ACPs with saturated chain lengths up to 16:0, being most active on intermediate chain length. This is 3-hydroxydecanoyl-[acyl-carrier-protein] dehydratase from Yersinia enterocolitica serotype O:8 / biotype 1B (strain NCTC 13174 / 8081).